We begin with the raw amino-acid sequence, 93 residues long: Small ribosomal subunit protein bS18 (93 aa).

The segment covering 1-11 (MAPSARNRKPG) has biased composition (basic residues). Residues 1–27 (MAPSARNRKPGARSMAKAAALRKPKKK) are disordered.

The protein belongs to the bacterial ribosomal protein bS18 family. As to quaternary structure, part of the 30S ribosomal subunit. Forms a tight heterodimer with protein bS6.

Its function is as follows. Binds as a heterodimer with protein bS6 to the central domain of the 16S rRNA, where it helps stabilize the platform of the 30S subunit. This Salinispora tropica (strain ATCC BAA-916 / DSM 44818 / JCM 13857 / NBRC 105044 / CNB-440) protein is Small ribosomal subunit protein bS18.